Here is a 508-residue protein sequence, read N- to C-terminus: Rhamnogalacturonan I rhamnosyltransferase 1 (508 aa).

The chain crosses the membrane as a helical; Signal-anchor for type II membrane protein span at residues 41-63 (LWMIRAVTVLLLWSCFVHLMALG). Residues Asn-136, Asn-202, and Asn-223 are each glycosylated (N-linked (GlcNAc...) asparagine). 277 to 279 (HLR) contributes to the substrate binding site. A glycan (N-linked (GlcNAc...) asparagine) is linked at Asn-391.

This sequence belongs to the glycosyltransferase GT106 family. Highly expressed in siliques. Expressed in stems and flowers. Expressed at low levels in roots and rosette leaves.

Its subcellular location is the golgi apparatus membrane. It catalyses the reaction alpha-D-galacturonosyl-[(1-&gt;2)-alpha-L-rhamnosyl-(1-&gt;4)-alpha-D-galacturonosyl](n) + UDP-beta-L-rhamnose = [(1-&gt;2)-alpha-L-rhamnosyl-(1-&gt;4)-alpha-D-galacturonosyl](n+1) + UDP + H(+). Its pathway is glycan metabolism; pectin biosynthesis. Functionally, glycosyltransferase involved in the formation of rhamnogalacturonan I (RG-I) oligosaccharides in the seed coat mucilage, which is a specialized cell wall with abundant RG-I. Transfers the rhamnose residue from UDP-beta-L-rhamnose to RG-I oligosaccharides. Prefers RG-I oligosaccharides with a degree of polymerization of 5 or larger than 5. Does not act on oligosaccharides with a degree of polymerization of 4 or smaller than 4. Does not require metal ions for its activity. The protein is Rhamnogalacturonan I rhamnosyltransferase 1 of Arabidopsis thaliana (Mouse-ear cress).